The chain runs to 64 residues: Large ribosomal subunit protein bL35 (64 aa).

It belongs to the bacterial ribosomal protein bL35 family.

This is Large ribosomal subunit protein bL35 from Kineococcus radiotolerans (strain ATCC BAA-149 / DSM 14245 / SRS30216).